We begin with the raw amino-acid sequence, 491 residues long: Blue-light-activated histidine kinase (491 aa).

Positions 19 to 92 (EANPFTAAVE…EIIHSALEAE (74 aa)) constitute a PAS 1 domain. Residue Cys69 is modified to S-4a-FMN cysteine. Residues 93-147 (QSVEIDILNYKKSGEPFWNRLHISPVKTENGELHHFVSSQLDVTLELGKLVELEK) enclose the PAC domain. The PAS 2 domain maps to 159–230 (SSDQLQYIVE…QRSQESFATG (72 aa)). Residues 286-368 (EISHRFKNSM…GHRIRTSGPE (83 aa)) are HWE histidine kinase domain. Residue His289 is modified to Phosphohistidine; by autocatalysis.

Post-translationally, FMN binds covalently to cysteine after exposure to blue light and this bond is spontaneously broken in the dark.

It carries out the reaction ATP + protein L-histidine = ADP + protein N-phospho-L-histidine.. Functionally, photosensitive kinase that is involved in increased bacterial virulence upon exposure to light. This chain is Blue-light-activated histidine kinase, found in Brucella anthropi (strain ATCC 49188 / DSM 6882 / CCUG 24695 / JCM 21032 / LMG 3331 / NBRC 15819 / NCTC 12168 / Alc 37) (Ochrobactrum anthropi).